A 461-amino-acid polypeptide reads, in one-letter code: Argininosuccinate lyase (461 aa).

Belongs to the lyase 1 family. Argininosuccinate lyase subfamily.

It is found in the cytoplasm. The catalysed reaction is 2-(N(omega)-L-arginino)succinate = fumarate + L-arginine. Its pathway is amino-acid biosynthesis; L-arginine biosynthesis; L-arginine from L-ornithine and carbamoyl phosphate: step 3/3. The polypeptide is Argininosuccinate lyase (Bacillus subtilis (strain 168)).